A 365-amino-acid polypeptide reads, in one-letter code: Patr class I histocompatibility antigen, A-2 alpha chain (365 aa).

The N-terminal stretch at 1–24 (MAVMPPRTLLLLLSGALALTQTWA) is a signal peptide. The alpha-1 stretch occupies residues 25–114 (GSHSMRYFFT…LRGYYNQSED (90 aa)). The Extracellular segment spans residues 25-308 (GSHSMRYFFT…EPSSQPTIPI (284 aa)). N-linked (GlcNAc...) asparagine glycosylation occurs at Asn-110. The segment at 115–206 (GSHTIQIMYG…ENGKETLQRT (92 aa)) is alpha-2. 2 disulfides stabilise this stretch: Cys-125–Cys-188 and Cys-227–Cys-283. Residues 207–298 (DPPKTHMTHH…GLPKPLTLRW (92 aa)) are alpha-3. The region spanning 209-295 (PKTHMTHHPI…QHEGLPKPLT (87 aa)) is the Ig-like C1-type domain. Residues 299-308 (EPSSQPTIPI) are connecting peptide. A helical membrane pass occupies residues 309–332 (VGIIAGLVLLGAVITGAVVAAVMW). At 333–365 (RRKSSDRKGGSYTQAASSDSAQGSDVSLTACKV) the chain is on the cytoplasmic side. The disordered stretch occupies residues 339 to 360 (RKGGSYTQAASSDSAQGSDVSL). Ser-343 is modified (phosphoserine). Residue Tyr-344 is modified to Phosphotyrosine. Low complexity predominate over residues 346-359 (QAASSDSAQGSDVS). 5 positions are modified to phosphoserine: Ser-349, Ser-350, Ser-352, Ser-356, and Ser-359.

Belongs to the MHC class I family. In terms of assembly, heterodimer of an alpha chain and a beta chain (beta-2-microglobulin).

It is found in the membrane. In terms of biological role, involved in the presentation of foreign antigens to the immune system. In Pan troglodytes (Chimpanzee), this protein is Patr class I histocompatibility antigen, A-2 alpha chain.